The following is an 885-amino-acid chain: MPLHGKDPFELNKTRVKSGEEYFVIKFTKEHFKRYKDYIDRYELYRQKIWTCSITGKQNLTFEEALLSEKNASEKVSKVSELLLPHCLEFIQYKEITLEEMTNQLYEFLLMNYYPGEIVSFKKANVKYTGRIIELLENYNESDEQSDNEQQKKSSSSSSTTTTTTTPTTPPTTTTTTSSSINALSAIPIPKKEIKLQLYSDDENEEEDEKNNGDTSSDKKGEKEKEKEKEKEKEKEKEKEKEKEKEKEKEKEKEKDSDTKSVRKYVDPRKKLDSIKKYYKIYVDSQGKNFIINIKDIQKREPPIFKPMVKDTIKTVAKKTKHLGGFWEVEPELIKKYNLEGLKIPSSVRKEVEQHLKRKRIADGEILEDTEEESVDIESNDNSNSNGNSNSNNNLDSSDESETERKRKRPKYPIEDQDVDRENEETGKENERPIASSDFFCLSNTFGDFLMVWHFLNHFEKVLLLSPFPLDDFEMAIQHHTETNILVESHIRLMKTIFTLPSYSSGTPKKTFGGKAITDRNWLATLRAYFQNEVKRIAIEEKEKQEKLKQLEEQNIRMLNLANELPGSDDEDDEMKLDEDGNEIKKDVEMKDNDGTKDTKKDDEENEEEEEEEEEEEEEVASDEGEEEWKEENEIITSADANTICKVLKKKNYFKLSVEERIYILAYLVKQTIASEKIRKHLEKNVELGNEVKQEKKGIILEEKQLKQDDAAAAAEDDDENNEDDEEQQQQEVKKPKGAKQKKPITPVVEKEIEKLEKKLEILDEKLEKYSTRLESLGRDRNYRNYWYWYQLPSKIYVENENGGWEYYSSKKELDDLIKYLDNRGIRERKLLFNIKPKYDFIVSQLEKKNKEIIEQIQFESKRSQRIKQLYTEKSYISWENKYDY.

In terms of domain architecture, WAC spans 20 to 125; sequence EEYFVIKFTK…GEIVSFKKAN (106 aa). Disordered regions lie at residues 141 to 184, 201 to 264, and 367 to 431; these read ESDE…INAL, DDEN…SVRK, and LEDT…KENE. The span at 154 to 180 shows a compositional bias: low complexity; it reads SSSSSSTTTTTTTPTTPPTTTTTTSSS. The segment covering 210–264 has biased composition (basic and acidic residues); that stretch reads KNNGDTSSDKKGEKEKEKEKEKEKEKEKEKEKEKEKEKEKEKEKEKDSDTKSVRK. Positions 217–260 form a coiled coil; that stretch reads SDKKGEKEKEKEKEKEKEKEKEKEKEKEKEKEKEKEKEKDSDTK. Acidic residues predominate over residues 367–379; that stretch reads LEDTEEESVDIES. Residues 380-396 are compositionally biased toward low complexity; sequence NDNSNSNGNSNSNNNLD. Positions 443–503 constitute a DDT domain; it reads SNTFGDFLMV…MKTIFTLPSY (61 aa). Positions 530–565 form a coiled coil; sequence FQNEVKRIAIEEKEKQEKLKQLEEQNIRMLNLANEL. Disordered regions lie at residues 562-632 and 707-744; these read ANEL…WKEE and KQDD…QKKP. Acidic residues predominate over residues 567–577; it reads GSDDEDDEMKL. Basic and acidic residues predominate over residues 578 to 603; sequence DEDGNEIKKDVEMKDNDGTKDTKKDD. Coiled coils occupy residues 593–628 and 674–782; these read NDGT…GEEE and ASEK…RDRN. Composition is skewed to acidic residues over residues 604 to 631 and 715 to 729; these read EENE…EWKE and AEDD…EEQQ.

Its subcellular location is the nucleus. The polypeptide is DDT domain-containing protein DDB_G0282237 (Dictyostelium discoideum (Social amoeba)).